A 645-amino-acid chain; its full sequence is DNA mismatch repair protein MutL (645 aa).

2 disordered regions span residues 353 to 381 (RPENQLGGSVPAAAEPRPTGPDAGEFGPQ) and 395 to 420 (QGEPFARPAGGGSGSGYQYSPRPTTG).

It belongs to the DNA mismatch repair MutL/HexB family.

Its function is as follows. This protein is involved in the repair of mismatches in DNA. It is required for dam-dependent methyl-directed DNA mismatch repair. May act as a 'molecular matchmaker', a protein that promotes the formation of a stable complex between two or more DNA-binding proteins in an ATP-dependent manner without itself being part of a final effector complex. In Pseudomonas syringae pv. tomato (strain ATCC BAA-871 / DC3000), this protein is DNA mismatch repair protein MutL.